The chain runs to 204 residues: Facilitator of iron transport 3 (204 aa).

The first 18 residues, 1 to 18 (MKFSSALVLSAVAATALA), serve as a signal peptide directing secretion. 2 disordered regions span residues 84 to 104 (SAAE…SGSS) and 133 to 175 (EGSS…SSTA). A compositionally biased stretch (low complexity) spans 135 to 175 (SSNTWSPSSTSTSSEAATSSASTTATTTAETSSSATSSSTA). G182 carries the GPI-anchor amidated glycine lipid modification. A propeptide spans 183-204 (AADAITAGTGLMGAALAAVMLL) (removed in mature form).

Post-translationally, the GPI-anchor is attached to the protein in the endoplasmic reticulum and serves to target the protein to the cell surface. There, the glucosamine-inositol phospholipid moiety is cleaved off and the GPI-modified mannoprotein is covalently attached via its lipidless GPI glycan remnant to the 1,6-beta-glucan of the outer cell wall layer.

The protein localises to the secreted. Its subcellular location is the cell wall. It localises to the membrane. Involved in the uptake of non-siderophore and siderophore sources of iron. Has a role in the retention of iron in the cell wall and periplasmic space. In Saccharomyces cerevisiae (strain ATCC 204508 / S288c) (Baker's yeast), this protein is Facilitator of iron transport 3 (FIT3).